The following is a 361-amino-acid chain: Protein RecA (361 aa).

77–84 (GPESSGKT) is a binding site for ATP.

This sequence belongs to the RecA family.

It is found in the cytoplasm. Can catalyze the hydrolysis of ATP in the presence of single-stranded DNA, the ATP-dependent uptake of single-stranded DNA by duplex DNA, and the ATP-dependent hybridization of homologous single-stranded DNAs. It interacts with LexA causing its activation and leading to its autocatalytic cleavage. In Brucella suis (strain ATCC 23445 / NCTC 10510), this protein is Protein RecA.